The following is a 233-amino-acid chain: 3,4-dihydroxy-2-butanone 4-phosphate synthase (233 aa).

Residue Glu-37 coordinates Mg(2+). Glu-37 serves as a coordination point for Mn(2+). A D-ribulose 5-phosphate-binding site is contributed by Asp-41. Cys-66 bears the S-glutathionyl cysteine mark. D-ribulose 5-phosphate is bound by residues Thr-92 and 150–154 (RRGHT). A Mg(2+)-binding site is contributed by His-153. Mn(2+) is bound at residue His-153.

As to quaternary structure, homodimer. It depends on Mg(2+) as a cofactor. The cofactor is Mn(2+). In terms of processing, S-glutathionylation is reversible and dependent on a glutaredoxin.

The catalysed reaction is D-ribulose 5-phosphate = (2S)-2-hydroxy-3-oxobutyl phosphate + formate + H(+). It participates in cofactor biosynthesis; riboflavin biosynthesis; 2-hydroxy-3-oxobutyl phosphate from D-ribulose 5-phosphate: step 1/1. Functionally, catalyzes the conversion of D-ribulose 5-phosphate to formate and 3,4-dihydroxy-2-butanone 4-phosphate. The chain is 3,4-dihydroxy-2-butanone 4-phosphate synthase (RIB3) from Pyricularia oryzae (strain 70-15 / ATCC MYA-4617 / FGSC 8958) (Rice blast fungus).